Reading from the N-terminus, the 179-residue chain is Ribosome maturation factor RimM (179 aa).

The 73-residue stretch at 98 to 170 (PDEFWDRRLR…RIVVSGIPGL (73 aa)) folds into the PRC barrel domain.

This sequence belongs to the RimM family. In terms of assembly, binds ribosomal protein uS19.

It localises to the cytoplasm. Its function is as follows. An accessory protein needed during the final step in the assembly of 30S ribosomal subunit, possibly for assembly of the head region. Essential for efficient processing of 16S rRNA. May be needed both before and after RbfA during the maturation of 16S rRNA. It has affinity for free ribosomal 30S subunits but not for 70S ribosomes. This is Ribosome maturation factor RimM from Cutibacterium acnes (strain DSM 16379 / KPA171202) (Propionibacterium acnes).